The primary structure comprises 430 residues: uncharacterized protein (430 aa).

This is an uncharacterized protein from Bos taurus (Bovine).